A 92-amino-acid chain; its full sequence is Small ribosomal subunit protein uS19 (92 aa).

It belongs to the universal ribosomal protein uS19 family.

Functionally, protein S19 forms a complex with S13 that binds strongly to the 16S ribosomal RNA. This chain is Small ribosomal subunit protein uS19, found in Acidovorax sp. (strain JS42).